The chain runs to 710 residues: Aminopeptidase P2 (710 aa).

The transit peptide at 1–79 (MIPLTLSSPS…IRKAQTKVVV (79 aa)) directs the protein to the chloroplast. 2 residues coordinate a peptide: arginine 147 and histidine 486. Residues aspartate 506, aspartate 517, and histidine 580 each coordinate Mn(2+). Positions 580, 589, and 614 each coordinate a peptide. Glutamate 614 and glutamate 628 together coordinate Mn(2+).

The protein belongs to the peptidase M24B family. Homodimer. Mn(2+) serves as cofactor.

The protein localises to the plastid. Its subcellular location is the chloroplast. The enzyme catalyses Release of any N-terminal amino acid, including proline, that is linked to proline, even from a dipeptide or tripeptide.. Catalyzes the removal of a penultimate prolyl residue from the N-termini of peptides, such as Arg-Pro-Pro. This chain is Aminopeptidase P2, found in Arabidopsis thaliana (Mouse-ear cress).